The chain runs to 248 residues: Ureidoacrylate amidohydrolase RutB (248 aa).

Residue Asp41 is the Proton acceptor of the active site. Lys150 is a catalytic residue. Cys183 (nucleophile) is an active-site residue.

Belongs to the isochorismatase family. RutB subfamily.

It carries out the reaction (Z)-3-ureidoacrylate + H2O + H(+) = (Z)-3-aminoacrylate + NH4(+) + CO2. The enzyme catalyses (Z)-3-ureidoacrylate + H2O = (Z)-3-aminoacrylate + carbamate + H(+). It catalyses the reaction (Z)-2-methylureidoacrylate + H2O + H(+) = (Z)-2-methylaminoacrylate + NH4(+) + CO2. In terms of biological role, hydrolyzes ureidoacrylate to form aminoacrylate and carbamate. The carbamate hydrolyzes spontaneously, thereby releasing one of the nitrogen atoms of the pyrimidine ring as ammonia and one of its carbon atoms as CO2. The chain is Ureidoacrylate amidohydrolase RutB from Methylorubrum extorquens (strain ATCC 14718 / DSM 1338 / JCM 2805 / NCIMB 9133 / AM1) (Methylobacterium extorquens).